Here is a 1321-residue protein sequence, read N- to C-terminus: MAAAAASGAGGAAGAGTGGAGPAGRLLPPPAPGSPAAPAAVSPAAGQPRPPAPASRGPMPARIGYYEIDRTIGKGNFAVVKRATHLVTKAKVAIKIIDKTQLDEENLKKIFREVQIMKMLCHPHIIRLYQVMETERMIYLVTEYASGGEIFDHLVAHGRMAEKEARRKFKQIVTAVYFCHCRNIVHRDLKAENLLLDANLNIKIADFGFSNLFTPGQLLKTWCGSPPYAAPELFEGKEYDGPKVDIWSLGVVLYVLVCGALPFDGSTLQNLRARVLSGKFRIPFFMSTECEHLIRHMLVLDPNKRLSMEQICKHKWMKLGDADPNFDRLIAECQQLKEERQVDPLNEDVLLAMEDMGLDKEQTLQSLRSDAYDHYSAIYSLLCDRHKRHKTLRLGALPSMPRALAFQAPVNIQAEQAGTAMNISVPQVQLINPENQIVEPDGTLNLDSDEGEEPSPEALVRYLSMRRHTVGVADPRTEVMEDLQKLLPGFPGVNPQAPFLQVAPNVNFMHNLLPMQNLQPTGQLEYKEQSLLQPPTLQLLNGMGPLGRRASDGGANIQLHAQQLLKRPRGPSPLVTMTPAVPAVTPVDEESSDGEPDQEAVQSSTYKDSNTLHLPTERFSPVRRFSDGAASIQAFKAHLEKMGNNSSIKQLQQECEQLQKMYGGQIDERTLEKTQQQHMLYQQEQHHQILQQQIQDSICPPQPSPPLQAACENQPALLTHQLQRLRIQPSSPPPNHPNNHLFRQPSNSPPPMSSAMIQPHGAASSSQFQGLPSRSAIFQQQPENCSSPPNVALTCLGMQQPAQSQQVTIQVQEPVDMLSNMPGTAAGSSGRGISISPSAGQMQMQHRTNLMATLSYGHRPLSKQLSADSAEAHSLNVNRFSPANYDQAHLHPHLFSDQSRGSPSSYSPSTGVGFSPTQALKVPPLDQFPTFPPSAHQQPPHYTTSALQQALLSPTPPDYTRHQQVPHILQGLLSPRHSLTGHSDIRLPPTEFAQLIKRQQQQRQQQQQQQQQQEYQELFRHMNQGDAGSLAPSLGGQSMTERQALSYQNADSYHHHTSPQHLLQIRAQECVSQASSPTPPHGYAHQPALMHSESMEEDCSCEGAKDGFQDSKSSSTLTKGCHDSPLLLSTGGPGDPESLLGTVSHAQELGIHPYGHQPTAAFSKNKVPSREPVIGNCMDRSSPGQAVELPDHNGLGYPARPSVHEHHRPRALQRHHTIQNSDDAYVQLDNLPGMSLVAGKALSSARMSDAVLSQSSLMGSQQFQDGENEECGASLGGHEHPDLSDGSQHLNSSCYPSTCITDILLSYKHPEVSFSMEQAGV.

The disordered stretch occupies residues 1–59; it reads MAAAAASGAGGAAGAGTGGAGPAGRLLPPPAPGSPAAPAAVSPAAGQPRPPAPASRGPM. Over residues 8–22 the composition is skewed to gly residues; it reads GAGGAAGAGTGGAGP. Low complexity predominate over residues 36-47; it reads AAPAAVSPAAGQ. The 252-residue stretch at 66 to 317 folds into the Protein kinase domain; it reads YEIDRTIGKG…MEQICKHKWM (252 aa). Residue Thr71 is modified to Phosphothreonine. ATP is bound by residues 72-80 and Lys95; that span reads IGKGNFAVV. Position 113 is a phosphothreonine (Glu113). The Proton acceptor role is filled by Asp188. A Phosphothreonine; by LKB1 modification is found at Thr221. Positions 344 to 384 constitute a UBA domain; it reads PLNEDVLLAMEDMGLDKEQTLQSLRSDAYDHYSAIYSLLCD. Thr469 carries the post-translational modification Phosphothreonine. Ser551, Ser591, and Ser592 each carry phosphoserine. Residues 585–614 are disordered; sequence TPVDEESSDGEPDQEAVQSSTYKDSNTLHL. A compositionally biased stretch (acidic residues) spans 587–598; it reads VDEESSDGEPDQ. Polar residues predominate over residues 600–613; sequence AVQSSTYKDSNTLH. Residues Ser626 and Ser647 each carry the phosphoserine modification. Positions 727–772 are disordered; that stretch reads IQPSSPPPNHPNNHLFRQPSNSPPPMSSAMIQPHGAASSSQFQGLP. Over residues 763–772 the composition is skewed to polar residues; the sequence is ASSSQFQGLP. The residue at position 866 (Ser866) is a Phosphoserine. The segment at 894-945 is disordered; it reads LFSDQSRGSPSSYSPSTGVGFSPTQALKVPPLDQFPTFPPSAHQQPPHYTTS. The segment covering 896-909 has biased composition (low complexity); that stretch reads SDQSRGSPSSYSPS. A compositionally biased stretch (polar residues) spans 935 to 945; sequence AHQQPPHYTTS. Ser978 is subject to Phosphoserine. An Omega-N-methylarginine modification is found at Arg986. The segment covering 1256–1265 has biased composition (polar residues); sequence SLMGSQQFQD. A disordered region spans residues 1256-1289; that stretch reads SLMGSQQFQDGENEECGASLGGHEHPDLSDGSQH.

This sequence belongs to the protein kinase superfamily. CAMK Ser/Thr protein kinase family. SNF1 subfamily. Binds to and is activated by YWHAZ when phosphorylated on Thr-221. Interacts with 14-3-3 proteins. Interacts with HDAC4; this interaction leads to HDAC4 retention in the cytoplasm. Interacts with DEPTOR, MLST8/GbetaL, RICTOR and RPTOR. Mg(2+) serves as cofactor. Post-translationally, phosphorylated at Thr-221 by STK11/LKB1 in complex with STE20-related adapter-alpha (STRADA) pseudo kinase and CAB39. Phosphorylation at Thr-221 is inhibited in response to PTHLH/PTHrP. Phosphorylated at Thr-469 and Ser-551 in response to cAMP signaling. In terms of tissue distribution, expressed in chondrocytes.

Its subcellular location is the cytoplasm. It carries out the reaction L-seryl-[protein] + ATP = O-phospho-L-seryl-[protein] + ADP + H(+). The catalysed reaction is L-threonyl-[protein] + ATP = O-phospho-L-threonyl-[protein] + ADP + H(+). Its activity is regulated as follows. Activated by phosphorylation on Thr-221. Its function is as follows. Positive regulator of mTOR signaling that functions by triggering the degradation of DEPTOR, an mTOR inhibitor. Involved in the dynamic regulation of mTOR signaling in chondrocyte differentiation during skeletogenesis. Negatively regulates cAMP signaling pathway possibly by acting on CRTC2/TORC2 and CRTC3/TORC3. Prevents HDAC4 translocation to the nucleus. The polypeptide is Serine/threonine-protein kinase SIK3 (Homo sapiens (Human)).